A 413-amino-acid polypeptide reads, in one-letter code: Multifunctional CCA protein (413 aa).

ATP contacts are provided by glycine 8 and arginine 11. Glycine 8 and arginine 11 together coordinate CTP. Residues aspartate 21 and aspartate 23 each contribute to the Mg(2+) site. Residues arginine 91, arginine 137, and arginine 140 each coordinate ATP. Residues arginine 91, arginine 137, and arginine 140 each contribute to the CTP site. The HD domain maps to 228–329; that stretch reads TGKHTLLSLK…VSLFDKGDFW (102 aa).

Belongs to the tRNA nucleotidyltransferase/poly(A) polymerase family. Bacterial CCA-adding enzyme type 1 subfamily. Monomer. Can also form homodimers and oligomers. Requires Mg(2+) as cofactor. The cofactor is Ni(2+).

It catalyses the reaction a tRNA precursor + 2 CTP + ATP = a tRNA with a 3' CCA end + 3 diphosphate. The enzyme catalyses a tRNA with a 3' CCA end + 2 CTP + ATP = a tRNA with a 3' CCACCA end + 3 diphosphate. Catalyzes the addition and repair of the essential 3'-terminal CCA sequence in tRNAs without using a nucleic acid template. Adds these three nucleotides in the order of C, C, and A to the tRNA nucleotide-73, using CTP and ATP as substrates and producing inorganic pyrophosphate. tRNA 3'-terminal CCA addition is required both for tRNA processing and repair. Also involved in tRNA surveillance by mediating tandem CCA addition to generate a CCACCA at the 3' terminus of unstable tRNAs. While stable tRNAs receive only 3'-terminal CCA, unstable tRNAs are marked with CCACCA and rapidly degraded. This Shewanella denitrificans (strain OS217 / ATCC BAA-1090 / DSM 15013) protein is Multifunctional CCA protein.